The primary structure comprises 740 residues: Catalase-peroxidase 2 (740 aa).

Positions 1–27 are cleaved as a signal peptide; sequence MFKKTKPRISILALTISCAIYSGAALA. The tryptophyl-tyrosyl-methioninium (Trp-Tyr) (with M-254) cross-link spans 106–228; that stretch reads WHSAGTYRIY…LAAVQMGLIY (123 aa). The active-site Proton acceptor is H107. Residues 228-254 constitute a cross-link (tryptophyl-tyrosyl-methioninium (Tyr-Met) (with W-106)); sequence YVNPEGPNGVPDPLLAAKDIRDTFGRM. H269 lines the heme b pocket.

This sequence belongs to the peroxidase family. Peroxidase/catalase subfamily. As to quaternary structure, homodimer or homotetramer. The cofactor is heme b. Formation of the three residue Trp-Tyr-Met cross-link is important for the catalase, but not the peroxidase activity of the enzyme.

The enzyme catalyses H2O2 + AH2 = A + 2 H2O. It catalyses the reaction 2 H2O2 = O2 + 2 H2O. Bifunctional enzyme with both catalase and broad-spectrum peroxidase activity. In Cellvibrio japonicus (strain Ueda107) (Pseudomonas fluorescens subsp. cellulosa), this protein is Catalase-peroxidase 2.